The sequence spans 164 residues: MVKLTQRLGGLVLRFAAFCAALGAVIAMITSRERSSFFVISLVAKYSDLAAFKYFVIANAIVTVYSFLVLFLPKESLLWKFVVVLDLMVTMLLTSSLSAAVAVAQVGKRGNANAGWLPICGQVPRFCDQITGALIAGLVALVLYVFLLIFSIHHVVDPFLLRKS.

Residues 1–8 (MVKLTQRL) are Cytoplasmic-facing. Residues 9–29 (GGLVLRFAAFCAALGAVIAMI) form a helical membrane-spanning segment. Residues 30 to 51 (TSRERSSFFVISLVAKYSDLAA) are Extracellular-facing. A helical membrane pass occupies residues 52–72 (FKYFVIANAIVTVYSFLVLFL). Over 73-80 (PKESLLWK) the chain is Cytoplasmic. A helical transmembrane segment spans residues 81–101 (FVVVLDLMVTMLLTSSLSAAV). Residues 102–129 (AVAQVGKRGNANAGWLPICGQVPRFCDQ) lie on the Extracellular side of the membrane. A helical membrane pass occupies residues 130-150 (ITGALIAGLVALVLYVFLLIF). The Cytoplasmic portion of the chain corresponds to 151 to 164 (SIHHVVDPFLLRKS).

This sequence belongs to the Casparian strip membrane proteins (CASP) family. Homodimer and heterodimers.

It localises to the cell membrane. This Arabidopsis thaliana (Mouse-ear cress) protein is CASP-like protein 1C2.